A 79-amino-acid polypeptide reads, in one-letter code: Acyl carrier protein (79 aa).

Residues serine 2–leucine 77 form the Carrier domain. Residue serine 37 is modified to O-(pantetheine 4'-phosphoryl)serine.

Belongs to the acyl carrier protein (ACP) family. In terms of processing, 4'-phosphopantetheine is transferred from CoA to a specific serine of apo-ACP by AcpS. This modification is essential for activity because fatty acids are bound in thioester linkage to the sulfhydryl of the prosthetic group.

Its subcellular location is the cytoplasm. It participates in lipid metabolism; fatty acid biosynthesis. Functionally, carrier of the growing fatty acid chain in fatty acid biosynthesis. In Alkalilimnicola ehrlichii (strain ATCC BAA-1101 / DSM 17681 / MLHE-1), this protein is Acyl carrier protein.